The following is a 747-amino-acid chain: 3',5'-cyclic-AMP phosphodiesterase 4D (747 aa).

The disordered stretch occupies residues 1–28 (MERDTCDVLSRSKSASEETLHSCNEEED). Positions 14-24 (SASEETLHSCN) are enriched in basic and acidic residues. A phosphoserine mark is found at Ser-238, Ser-240, Ser-287, and Ser-314. A disordered region spans residues 282–302 (EVEIPSPTQKEKEKKKRPMSQ). The PDEase domain maps to 325 to 654 (VKTEQEDVLA…EWYQSTIPQS (330 aa)). Residue Lys-326 forms a Glycyl lysine isopeptide (Lys-Gly) (interchain with G-Cter in SUMO) linkage. Catalysis depends on His-401, which acts as the Proton donor. Residue His-401 coordinates 3',5'-cyclic AMP. His-401 serves as a coordination point for AMP. The Zn(2+) site is built by His-405, His-441, Asp-442, and Asp-559. AMP contacts are provided by Asp-442, Asp-559, Asn-562, Gln-610, and Phe-613. Asp-442 provides a ligand contact to Mg(2+). Asp-442 is a binding site for Mn(2+). Residues Gln-610 and Phe-613 each contribute to the 3',5'-cyclic AMP site. A disordered region spans residues 649–747 (STIPQSPSPA…CVPDDCCPDT (99 aa)). Positions 701–712 (CSDSKTLCTQDS) are enriched in polar residues. Positions 718-734 (PLDEQVEEEAVAEEESQ) are enriched in acidic residues.

This sequence belongs to the cyclic nucleotide phosphodiesterase family. PDE4 subfamily. Homodimer for the long isoforms. Isoforms with truncated N-termini are monomeric. Binds ARRB2. Interacts with PDE4DIP. Identified in a complex composed of RYR1, PDE4D, PKA, FKBP1A and protein phosphatase 1 (PP1). Interacts (via N-terminal region) with SHANK2 (via proline-rich region); the interaction is increased in a PKA-dependent manner. The cofactor is Zn(2+). It depends on Mg(2+) as a cofactor. Mn(2+) serves as cofactor. Sumoylation of long isoforms by PIAS4 augments their activation by PKA phosphorylation and represses their inhibition by ERK phosphorylation. As to expression, expressed in brain (at protein level). Isoform 7 is detected in heart, brain, lung, kidney and testis.

The protein localises to the cytoplasm. Its subcellular location is the membrane. It is found in the cytoskeleton. It localises to the microtubule organizing center. The protein resides in the centrosome. The protein localises to the apical cell membrane. The enzyme catalyses 3',5'-cyclic AMP + H2O = AMP + H(+). The protein operates within purine metabolism; 3',5'-cyclic AMP degradation; AMP from 3',5'-cyclic AMP: step 1/1. Inhibited by rolipram. Activated by phosphatidic acid. Hydrolyzes the second messenger cAMP, which is a key regulator of many important physiological processes. The polypeptide is 3',5'-cyclic-AMP phosphodiesterase 4D (Pde4d) (Mus musculus (Mouse)).